A 204-amino-acid chain; its full sequence is Pro-hevein (204 aa).

The N-terminal stretch at 1-17 (MNIFIVVLLCLTGVAIA) is a signal peptide. Residues 18-60 (EQCGRQAGGKLCPNNLCCSQWGWCGSTDEYCSPDHNCQSNCKD) form the Chitin-binding type-1 domain. Intrachain disulfides connect cysteine 20–cysteine 35, cysteine 29–cysteine 41, cysteine 34–cysteine 48, and cysteine 54–cysteine 58. The propeptide occupies 61–66 (SGEGVG). One can recognise a Barwin domain in the interval 68–189 (GSASNVLATY…VNYQFVDCGD (122 aa)). Cystine bridges form between cysteine 96–cysteine 128, cysteine 117–cysteine 151, and cysteine 131–cysteine 187.

In terms of processing, proteolytically processed to yield the two chains of the mature protein. As to expression, laticifer.

In terms of biological role, N-acetyl-D-glucosamine / N-acetyl-D-neuraminic acid binding lectin. Can inhibit fungal growth. This Hevea brasiliensis (Para rubber tree) protein is Pro-hevein (HEV1).